A 309-amino-acid polypeptide reads, in one-letter code: MPDLTSVVQEIAEEMRERPDRGEVATYIPELARADPKAFGLVVIDADGQVAAAGDSDVPFSIQSISKVFTLTLALGMVGDRLWRRVGREPSGSPFNSIVQLEYERGIPRNPFINAGAIAVTDLILSRHQPREALGEILRFMQFLAQDSSIAIDEAVAASELRTGFRNAALANFMKAHGVIDNPVEYTLGVYFHHCAIAMTCRQLAEAGRFLAHSGRNPSTGHLVVQPERARRINAVMLTCGHYDGSGEFAFRVGLPGKSGVGGGILAVAPGRASIAVWSPGLDASGNSHLGRIALERLTKRLGWSIFGQ.

Substrate-binding residues include serine 64, asparagine 114, glutamate 160, asparagine 167, tyrosine 191, tyrosine 243, and valine 261.

This sequence belongs to the glutaminase family. As to quaternary structure, homotetramer.

The catalysed reaction is L-glutamine + H2O = L-glutamate + NH4(+). This chain is Glutaminase, found in Methylobacterium nodulans (strain LMG 21967 / CNCM I-2342 / ORS 2060).